A 248-amino-acid polypeptide reads, in one-letter code: MIINTAAYQFVTIQDPQTLADGVRAQAEQHALKGSVLVAEEGINLFLAGAAEQIGAFYAWLQADARFAQMRIKYSESAHQPFARLKVKIKPEIISFRRDDASPLQGRAPSVTPAVLREWLRNGQDDRGRPLVLLDTRNAQEVAYGTFQGALTLPIDKFTDLPGALEPHRGALADATVVSFCTGGIRCEKAALWMQADGMDNVLQLEGGILGYFEEVGGEGYEGRCFVFDERVALDPELKPLVDADRTA.

A Rhodanese domain is found at 127–221 (RGRPLVLLDT…YFEEVGGEGY (95 aa)). Cysteine 181 acts as the Cysteine persulfide intermediate in catalysis.

This sequence belongs to the TrhO family.

It catalyses the reaction uridine(34) in tRNA + AH2 + O2 = 5-hydroxyuridine(34) in tRNA + A + H2O. Functionally, catalyzes oxygen-dependent 5-hydroxyuridine (ho5U) modification at position 34 in tRNAs. This is tRNA uridine(34) hydroxylase from Xanthomonas euvesicatoria pv. vesicatoria (strain 85-10) (Xanthomonas campestris pv. vesicatoria).